Here is a 472-residue protein sequence, read N- to C-terminus: tRNA modification GTPase MnmE (472 aa).

The (6S)-5-formyl-5,6,7,8-tetrahydrofolate site is built by Arg-28, Glu-91, and Lys-130. The TrmE-type G domain maps to Gly-225 to Ala-391. K(+) is bound at residue Asn-235. GTP contacts are provided by residues Asn-235–Ser-240, Ser-254–Thr-260, and Asp-279–Gly-282. Mg(2+) is bound at residue Ser-239. Ser-254, Ile-256, and Thr-259 together coordinate K(+). Thr-260 contributes to the Mg(2+) binding site. Position 472 (Lys-472) interacts with (6S)-5-formyl-5,6,7,8-tetrahydrofolate.

It belongs to the TRAFAC class TrmE-Era-EngA-EngB-Septin-like GTPase superfamily. TrmE GTPase family. In terms of assembly, homodimer. Heterotetramer of two MnmE and two MnmG subunits. It depends on K(+) as a cofactor.

It localises to the cytoplasm. Exhibits a very high intrinsic GTPase hydrolysis rate. Involved in the addition of a carboxymethylaminomethyl (cmnm) group at the wobble position (U34) of certain tRNAs, forming tRNA-cmnm(5)s(2)U34. The sequence is that of tRNA modification GTPase MnmE from Treponema denticola (strain ATCC 35405 / DSM 14222 / CIP 103919 / JCM 8153 / KCTC 15104).